The following is a 752-amino-acid chain: Zinc finger protein 425 (752 aa).

Residues 9–80 form the KRAB domain; sequence VTFDDVALYF…EQGCLDKTRR (72 aa). C2H2-type zinc fingers lie at residues 190 to 212, 246 to 268, 274 to 296, 302 to 324, 330 to 352, 358 to 380, 386 to 408, 414 to 436, 442 to 464, 470 to 492, 498 to 520, 526 to 548, 554 to 576, 582 to 604, 610 to 632, 638 to 660, 666 to 688, 694 to 716, and 722 to 744; these read YSCYVCRKVFQVRRDLLKHKRSH, FQCSECEKSYFLKGSLVTHQVVH, YPCPECDKTFRYRANLKKHLCLH, FCCGECGRAFVQQCELTEHLRLH, FQCPQCDRCFRLKRGMKVHLTQH, FHCPECGRSFSRKAALKTHQRTH, FSCGECGRKFIYKIKLDEHIRVH, FSCPECNKSFRLKRSLKAHGLQH, FQCPECSRGFFWRNAMRAHQRLH, FPCAECGKRFTRPSKLACHTRVH, FPCGECKKTFSQQSRLTQHLKVH, FSCAECGRSFRRRAHLTEHTRLH, FQCPECDKSFSWKASMKFHQRMH, FACGECDKTYTHQSQLTEHLRLH, YQCPECEKTFRLKGNLKSHLLQH, FSCVMCGKSFTQQYRLTEHIRVH, FQCPECDKSYCIRGSLKVHLYKH, FQCPECGKGFLQKRSLKAHLCLH, and FSCDECGRSFTYVGALKTHIAVH.

This sequence belongs to the krueppel C2H2-type zinc-finger protein family.

The protein localises to the nucleus. It is found in the cytoplasm. Its function is as follows. Acts as a transcriptional repressor. The protein is Zinc finger protein 425 (ZNF425) of Homo sapiens (Human).